The sequence spans 200 residues: Probable nicotinate-nucleotide adenylyltransferase (200 aa).

It belongs to the NadD family.

It carries out the reaction nicotinate beta-D-ribonucleotide + ATP + H(+) = deamido-NAD(+) + diphosphate. It participates in cofactor biosynthesis; NAD(+) biosynthesis; deamido-NAD(+) from nicotinate D-ribonucleotide: step 1/1. Catalyzes the reversible adenylation of nicotinate mononucleotide (NaMN) to nicotinic acid adenine dinucleotide (NaAD). This Clavibacter sepedonicus (Clavibacter michiganensis subsp. sepedonicus) protein is Probable nicotinate-nucleotide adenylyltransferase.